A 596-amino-acid polypeptide reads, in one-letter code: Meiosis-specific protein ASY1 (596 aa).

Positions 15–228 constitute an HORMA domain; it reads QDSLLLTRNL…SKHLVLTLKV (214 aa). A disordered region spans residues 235–303; the sequence is CEDENDDMQD…NTQDPAENEQ (69 aa). The span at 282–295 shows a compositional bias: acidic residues; it reads QDDDDGEVDEDDNT. Residues 351–449 form the SWIRM domain; that stretch reads SKTGKDMYIK…ASSNRRLGKR (99 aa). Residues 562-596 form a disordered region; that stretch reads TVNCSQASQDRRGRKTSMVREPILQYSKRQKSQAN.

As to quaternary structure, interacts with ASY3.

Its subcellular location is the chromosome. It localises to the nucleus. Required for normal meiosis in male and female gametophytes. Plays a crucial role in coordinating the activity of DMC1, a key member of the homologous recombination machinery. Acts at the interface between the developing chromosome axes and the recombination machinery to ensure DMC1-mediated interhomolog recombination. This Arabidopsis thaliana (Mouse-ear cress) protein is Meiosis-specific protein ASY1.